Reading from the N-terminus, the 123-residue chain is Large ribosomal subunit protein uL18 (123 aa).

Belongs to the universal ribosomal protein uL18 family. In terms of assembly, part of the 50S ribosomal subunit; part of the 5S rRNA/L5/L18/L25 subcomplex. Contacts the 5S and 23S rRNAs.

In terms of biological role, this is one of the proteins that bind and probably mediate the attachment of the 5S RNA into the large ribosomal subunit, where it forms part of the central protuberance. In Chlamydia pneumoniae (Chlamydophila pneumoniae), this protein is Large ribosomal subunit protein uL18.